The sequence spans 235 residues: Large ribosomal subunit protein uL4 (235 aa).

Residues 45–75 (RAGTASTKTRGEVSGGGRKPWPQKHTGRARH) are disordered. The span at 65-75 (WPQKHTGRARH) shows a compositional bias: basic residues.

The protein belongs to the universal ribosomal protein uL4 family. Part of the 50S ribosomal subunit.

Its function is as follows. One of the primary rRNA binding proteins, this protein initially binds near the 5'-end of the 23S rRNA. It is important during the early stages of 50S assembly. It makes multiple contacts with different domains of the 23S rRNA in the assembled 50S subunit and ribosome. Forms part of the polypeptide exit tunnel. This Thermotoga petrophila (strain ATCC BAA-488 / DSM 13995 / JCM 10881 / RKU-1) protein is Large ribosomal subunit protein uL4.